The primary structure comprises 617 residues: 1-deoxy-D-xylulose-5-phosphate synthase (617 aa).

Thiamine diphosphate contacts are provided by residues histidine 76 and 117 to 119 (GHS). Aspartate 148 contacts Mg(2+). Residues 149–150 (GA), asparagine 177, tyrosine 285, and glutamate 366 contribute to the thiamine diphosphate site. Asparagine 177 serves as a coordination point for Mg(2+).

This sequence belongs to the transketolase family. DXPS subfamily. As to quaternary structure, homodimer. The cofactor is Mg(2+). Requires thiamine diphosphate as cofactor.

The catalysed reaction is D-glyceraldehyde 3-phosphate + pyruvate + H(+) = 1-deoxy-D-xylulose 5-phosphate + CO2. The protein operates within metabolic intermediate biosynthesis; 1-deoxy-D-xylulose 5-phosphate biosynthesis; 1-deoxy-D-xylulose 5-phosphate from D-glyceraldehyde 3-phosphate and pyruvate: step 1/1. In terms of biological role, catalyzes the acyloin condensation reaction between C atoms 2 and 3 of pyruvate and glyceraldehyde 3-phosphate to yield 1-deoxy-D-xylulose-5-phosphate (DXP). This Histophilus somni (strain 129Pt) (Haemophilus somnus) protein is 1-deoxy-D-xylulose-5-phosphate synthase.